A 196-amino-acid chain; its full sequence is Ras-related protein RabC (196 aa).

Residue 13-20 coordinates GTP; the sequence is GESGVGKS. Residues 35-43 carry the Effector region motif; the sequence is FAPTLGVDF. GTP-binding positions include 63-67 and 121-124; these read DTAGQ and NKSD. S-geranylgeranyl cysteine attachment occurs at residues C195 and C196.

Belongs to the small GTPase superfamily. Rab family.

The protein resides in the cell membrane. The sequence is that of Ras-related protein RabC (rabC) from Dictyostelium discoideum (Social amoeba).